The following is a 474-amino-acid chain: MHDIKAIRDNQQAFEAAWSAKGRSGAAAEAVKLDALLRAAQTALQEAQAKRNESSKLIGMAKAKKDEAEATRLMAEVEHLKAVMASAAQTETEVGGQLRDLLASLPNIPAPEVPAGEDEAGNVEIRRWGDASKLPAGRLNNPKDHVDLGAALGGMDFEAAARMSGARFVVLKGQIARLERALGQFMLDLQTVQHGYTEVSPPLLVKDEALFGTGQLPKFKADLFKTSEQNWVERLDEQIALRVPPLLNITQTDVVENLKGLRAAASMDEQAARWLIPTAEVSLTNIVREQITDEAELPLRMTALTPSFRSEAGASGRDTRGMIRQHQFYKVELVSITTPDQSDEEHERMVGCAEAVLKALELPFRTMLLCTGDMGFGAKKTYDLEVWLPSQNTYREISSCSNCGDFQARRMDARFKKVGEKGARYVHTLNGSGLAVGRTLVAVLENYQDETGRITVPAVLVPYMGGVTHIGGEA.

278-280 (TAE) provides a ligand contact to L-serine. 309-311 (RSE) serves as a coordination point for ATP. An L-serine-binding site is contributed by Glu-332. 396–399 (EISS) lines the ATP pocket. Ser-432 contributes to the L-serine binding site.

This sequence belongs to the class-II aminoacyl-tRNA synthetase family. Type-1 seryl-tRNA synthetase subfamily. As to quaternary structure, homodimer. The tRNA molecule binds across the dimer.

The protein localises to the cytoplasm. The catalysed reaction is tRNA(Ser) + L-serine + ATP = L-seryl-tRNA(Ser) + AMP + diphosphate + H(+). It catalyses the reaction tRNA(Sec) + L-serine + ATP = L-seryl-tRNA(Sec) + AMP + diphosphate + H(+). It functions in the pathway aminoacyl-tRNA biosynthesis; selenocysteinyl-tRNA(Sec) biosynthesis; L-seryl-tRNA(Sec) from L-serine and tRNA(Sec): step 1/1. Functionally, catalyzes the attachment of serine to tRNA(Ser). Is also able to aminoacylate tRNA(Sec) with serine, to form the misacylated tRNA L-seryl-tRNA(Sec), which will be further converted into selenocysteinyl-tRNA(Sec). The polypeptide is Serine--tRNA ligase (Caulobacter sp. (strain K31)).